A 559-amino-acid polypeptide reads, in one-letter code: Cytochrome P450 86B1 (559 aa).

Residues 31–51 (FLLRDVQILELLIAIFVFVAI) form a helical membrane-spanning segment. Cysteine 488 provides a ligand contact to heme.

This sequence belongs to the cytochrome P450 family. Heme is required as a cofactor. Expressed in roots endodermis, anthers, stigmas, stomata of young pedicels of inflorescences, the placenta region of siliques, at the level of the hilum in matures seeds, at the junction of siliques to pedicels where abscission of floral parts takes place and in nectary glands.

It is found in the endoplasmic reticulum membrane. In terms of biological role, involved in very long chain fatty acids (VLCFA) omega-hydroxylation. Required for the synthesis of saturated VLCFA alpha, omega-bifunctional suberin monomers. This chain is Cytochrome P450 86B1 (CYP86B1), found in Arabidopsis thaliana (Mouse-ear cress).